We begin with the raw amino-acid sequence, 201 residues long: Glycerol-3-phosphate acyltransferase (201 aa).

Helical transmembrane passes span 10–30 (MLIGALIFGYVLGSIPFGLIL), 60–80 (LAAATLILDALKGTAAALIAA), 86–106 (AAIAAGFGAFIGHLFPVWIGF), 116–136 (LGVLIGLAWAGALVFAAAWIV), and 166–186 (ALAALFAIMTVIVFIKHRANI).

Belongs to the PlsY family. As to quaternary structure, probably interacts with PlsX.

The protein localises to the cell inner membrane. It carries out the reaction an acyl phosphate + sn-glycerol 3-phosphate = a 1-acyl-sn-glycero-3-phosphate + phosphate. Its pathway is lipid metabolism; phospholipid metabolism. Functionally, catalyzes the transfer of an acyl group from acyl-phosphate (acyl-PO(4)) to glycerol-3-phosphate (G3P) to form lysophosphatidic acid (LPA). This enzyme utilizes acyl-phosphate as fatty acyl donor, but not acyl-CoA or acyl-ACP. This Brucella melitensis biotype 2 (strain ATCC 23457) protein is Glycerol-3-phosphate acyltransferase.